Reading from the N-terminus, the 333-residue chain is Transcription factor MYB36 (333 aa).

HTH myb-type domains follow at residues Lys-9–Leu-62 and Arg-63–Leu-117. DNA-binding regions (H-T-H motif) lie at residues Trp-38–Leu-62 and Trp-90–Leu-113. Positions Gly-119–Leu-150 are disordered. Positions Lys-122 to Glu-135 are enriched in polar residues. A compositionally biased stretch (low complexity) spans Asn-136–Leu-150.

As to expression, expressed in leaves, roots (endodermis-specific) and seedlings.

It localises to the nucleus. Its function is as follows. Transcription factors that activates genes required for endodermal differentiation but represses genes involved in proliferative divisions, thus regulating the transition from proliferation to differentiation in root endodermis. Required for Casparian strip formation by positively regulating the expression of the Casparian strip genes CASP1, PER64 and ESB1 and other endodermis-specific genes, thus triggering correct localized lignin biosynthesis in root endodermis and subsequently regulating global ion homeostasis. The chain is Transcription factor MYB36 from Arabidopsis thaliana (Mouse-ear cress).